Reading from the N-terminus, the 304-residue chain is tRNA-uridine aminocarboxypropyltransferase 1 (304 aa).

The tract at residues 1–30 (MALSPSVVPQESEENNANCVETKQSQTAST) is disordered. Residues 15–30 (NNANCVETKQSQTAST) are compositionally biased toward polar residues. The DXTW motif lies at 206 to 209 (DSTW).

It belongs to the TDD superfamily. DTWD1 family.

Its subcellular location is the nucleus. It carries out the reaction a uridine in tRNA + S-adenosyl-L-methionine = a 3-[(3S)-3-amino-3-carboxypropyl]uridine in tRNA + S-methyl-5'-thioadenosine + H(+). In terms of biological role, catalyzes the formation of 3-(3-amino-3-carboxypropyl)uridine (acp3U) at position 20 in the D-loop of several cytoplasmic tRNAs (acp3U(20)). The sequence is that of tRNA-uridine aminocarboxypropyltransferase 1 from Rattus norvegicus (Rat).